The primary structure comprises 187 residues: Large ribosomal subunit protein uL5 (187 aa).

The protein belongs to the universal ribosomal protein uL5 family. As to quaternary structure, part of the 50S ribosomal subunit; part of the 5S rRNA/L5/L18/L25 subcomplex. Contacts the 5S rRNA and the P site tRNA. Forms a bridge to the 30S subunit in the 70S ribosome.

Its function is as follows. This is one of the proteins that bind and probably mediate the attachment of the 5S RNA into the large ribosomal subunit, where it forms part of the central protuberance. In the 70S ribosome it contacts protein S13 of the 30S subunit (bridge B1b), connecting the 2 subunits; this bridge is implicated in subunit movement. Contacts the P site tRNA; the 5S rRNA and some of its associated proteins might help stabilize positioning of ribosome-bound tRNAs. This is Large ribosomal subunit protein uL5 from Brachyspira hyodysenteriae (strain ATCC 49526 / WA1).